Reading from the N-terminus, the 567-residue chain is DNA ligase B (567 aa).

The active-site N6-AMP-lysine intermediate is Lys-132.

It belongs to the NAD-dependent DNA ligase family. LigB subfamily.

It carries out the reaction NAD(+) + (deoxyribonucleotide)n-3'-hydroxyl + 5'-phospho-(deoxyribonucleotide)m = (deoxyribonucleotide)n+m + AMP + beta-nicotinamide D-nucleotide.. Catalyzes the formation of phosphodiester linkages between 5'-phosphoryl and 3'-hydroxyl groups in double-stranded DNA using NAD as a coenzyme and as the energy source for the reaction. The sequence is that of DNA ligase B from Yersinia pestis bv. Antiqua (strain Angola).